The primary structure comprises 908 residues: Protein translocase subunit SecA (908 aa).

ATP-binding positions include Q87, 105–109, and D512; that span reads GEGKT. The interval 882–908 is disordered; that stretch reads DGEKVGRNDPCPCGSGKKYKQCHGKLT. Zn(2+)-binding residues include C892, C894, C903, and H904. Residues 898–908 show a composition bias toward basic residues; the sequence is KKYKQCHGKLT.

Belongs to the SecA family. In terms of assembly, monomer and homodimer. Part of the essential Sec protein translocation apparatus which comprises SecA, SecYEG and auxiliary proteins SecDF-YajC and YidC. Zn(2+) is required as a cofactor.

The protein localises to the cell inner membrane. Its subcellular location is the cytoplasm. The enzyme catalyses ATP + H2O + cellular proteinSide 1 = ADP + phosphate + cellular proteinSide 2.. Part of the Sec protein translocase complex. Interacts with the SecYEG preprotein conducting channel. Has a central role in coupling the hydrolysis of ATP to the transfer of proteins into and across the cell membrane, serving both as a receptor for the preprotein-SecB complex and as an ATP-driven molecular motor driving the stepwise translocation of polypeptide chains across the membrane. The chain is Protein translocase subunit SecA from Shewanella amazonensis (strain ATCC BAA-1098 / SB2B).